The primary structure comprises 254 residues: Phosphoribosylaminoimidazole-succinocarboxamide synthase (254 aa).

Belongs to the SAICAR synthetase family.

The enzyme catalyses 5-amino-1-(5-phospho-D-ribosyl)imidazole-4-carboxylate + L-aspartate + ATP = (2S)-2-[5-amino-1-(5-phospho-beta-D-ribosyl)imidazole-4-carboxamido]succinate + ADP + phosphate + 2 H(+). The protein operates within purine metabolism; IMP biosynthesis via de novo pathway; 5-amino-1-(5-phospho-D-ribosyl)imidazole-4-carboxamide from 5-amino-1-(5-phospho-D-ribosyl)imidazole-4-carboxylate: step 1/2. This Gluconacetobacter diazotrophicus (strain ATCC 49037 / DSM 5601 / CCUG 37298 / CIP 103539 / LMG 7603 / PAl5) protein is Phosphoribosylaminoimidazole-succinocarboxamide synthase.